The sequence spans 200 residues: Anthranilate synthase component 2, pyocyanine specific (200 aa).

The Glutamine amidotransferase type-1 domain maps to 2 to 195; that stretch reads RITLLDNFDS…LLWCGALAVR (194 aa). Residue 56–58 coordinates L-glutamine; that stretch reads GPG. Catalysis depends on Cys-83, which acts as the Nucleophile; for GATase activity. L-glutamine is bound by residues Gln-87 and 133–134; that span reads SL. Catalysis depends on for GATase activity residues His-169 and Glu-171.

As to quaternary structure, heterotetramer consisting of two non-identical subunits: a beta subunit (PhnB) and a large alpha subunit (PhnA).

The enzyme catalyses chorismate + L-glutamine = anthranilate + pyruvate + L-glutamate + H(+). The protein operates within secondary metabolite biosynthesis; pyocyanine biosynthesis. In terms of biological role, part of a heterotetrameric complex that catalyzes the two-step biosynthesis of anthranilate, a precursor for Pseudomonas quinolone signal (2-heptyl-3-hydroxy-4-quinolone; PQS) production which is required to induce the genes for the biosynthesis of the virulence factor pyocyanine (PCN), a characteristic blue-green phenazine pigment produced by P.aeruginosa. In the first step, the glutamine-binding beta subunit (PhnB) of anthranilate synthase (AS) provides the glutamine amidotransferase activity which generates ammonia as a substrate that, along with chorismate, is used in the second step, catalyzed by the large alpha subunit of AS (PhnA) to produce anthranilate. This chain is Anthranilate synthase component 2, pyocyanine specific, found in Pseudomonas aeruginosa (strain ATCC 15692 / DSM 22644 / CIP 104116 / JCM 14847 / LMG 12228 / 1C / PRS 101 / PAO1).